The following is a 242-amino-acid chain: Probable transcriptional regulatory protein Bcen2424_2294 (242 aa).

The protein belongs to the TACO1 family.

It is found in the cytoplasm. This chain is Probable transcriptional regulatory protein Bcen2424_2294, found in Burkholderia cenocepacia (strain HI2424).